A 1005-amino-acid polypeptide reads, in one-letter code: MDVRCINWFESHGENRFLYLKSRCRNGETVFIRFPHYFYYVVTDEIYQSLAPPPFNARPMGKMRTIDIDETISYNLDIKDRKCSVADMWLIEEPKKRNIQNATMDEFLNISWFYISNGISPDGCYSLDDQYLTKINNGCYHCGDPRNCFAKEIPRFDIPRSYLFLDIECHFDKKFPSVFINPISHTSYCYIDLSGKRLLFTLINEEMLTEQEIQEAVDRGCLRIQSLMEMDYERELVLCSEIVLLQIAKQLLELTFDYIVTFNGHNFDLRYITNRLELLTGEKIIFRSPDKKEAVHLCIYERNQSSHKGVGGMANTTFHVNNNNGTIFFDLYSFIQKSEKLDSYKLDSISKNAFSCMGKVLNRGVREMTFIGDDTTDAKGKAAVFAKVLTTGNYVTVDDIICKVIHKDIWENGFKVVLSCPTLTNDTYKLSFGKDDVDLAQMYKDYNLNIALDMARYCIHDACLCQYLWEYYGVETKTDAGASTYVLPQSMVFEYKASTVIKGPLLKLLLETKTILVRSETKQKFPYEGGKVFAPKQKMFSNNVLIFDYNSLYPNVCIFGNLSPETLVGVVVSSNRLEEEINNQLLLQKYPPPRYITVHCEPRLPNLISEIAIFDRSIEGTIPRLLRTFLAERARYKKMLKQATSSTEKAIYDSMQYTYKIIANSVYGLMGFRNSALYSYASAKSCTSIGRRMILYLESVLNGAELSNGMLRFANPLSNPFYMDDRDINPIVKTSLPIDYRFRFRSVYGDTDSVFTEIDSQDVDKSIEIAKELERLINSRVLFNNFKIEFEAVYKNLIMQSKKKYTTMKYSASSNSKSVPERINKGTSETRRDVSKFHKNMIKIYKTRLSEMLSEGRMNSNQVCIDILRSLETDLRSEFDSRSSPLELFMLSRMHHLNYKSADNPNMYLVTEYNKNNPETIELGERYYFAYICPANVPWTKKLVNIKTYETIIDRSFKLGSDQRIFYEVYFKRLTSEIVNLLDNKVLCISFFERMFGSRPTFYEA.

The protein belongs to the DNA polymerase type-B family. In terms of assembly, interacts with OPG148. Component of the Uracil-DNA glycosylase(UDG)-OPG148-polymerase complex; OPG148 and OPG116/UDG form a heterodimeric processivity factor that associates with OPG071 to form the processive polymerase holoenzyme.

It carries out the reaction DNA(n) + a 2'-deoxyribonucleoside 5'-triphosphate = DNA(n+1) + diphosphate. Its function is as follows. Catalyzes DNA synthesis. Acquires processivity by associating with a heterodimeric processivity factor comprised of the viral OPG148 and OPG116 proteins, thereby forming the DNA polymerase holoenzyme. Displays 3'- to 5' exonuclease activity. Might participate in viral DNA recombination. Does not perform OPG116/D4synthesis across an abasic site. This Variola virus protein is DNA polymerase (OPG071).